Consider the following 145-residue polypeptide: Ribonuclease HI (145 aa).

The 142-residue stretch at 1 to 142 folds into the RNase H type-1 domain; the sequence is MNQTVYLYTD…ADDLANRGAA (142 aa). Residues Asp10, Glu48, Asp70, and Asp134 each coordinate Mg(2+).

This sequence belongs to the RNase H family. As to quaternary structure, monomer. It depends on Mg(2+) as a cofactor.

The protein localises to the cytoplasm. It catalyses the reaction Endonucleolytic cleavage to 5'-phosphomonoester.. In terms of biological role, endonuclease that specifically degrades the RNA of RNA-DNA hybrids. This Neisseria meningitidis serogroup B (strain ATCC BAA-335 / MC58) protein is Ribonuclease HI.